The chain runs to 79 residues: Small ribosomal subunit protein bS18 (79 aa).

It belongs to the bacterial ribosomal protein bS18 family. Part of the 30S ribosomal subunit. Forms a tight heterodimer with protein bS6.

Its function is as follows. Binds as a heterodimer with protein bS6 to the central domain of the 16S rRNA, where it helps stabilize the platform of the 30S subunit. This is Small ribosomal subunit protein bS18 from Enterococcus faecalis (strain ATCC 700802 / V583).